The primary structure comprises 190 residues: Putative phosphatidylethanolamine-binding protein (190 aa).

It belongs to the phosphatidylethanolamine-binding protein family.

The polypeptide is Putative phosphatidylethanolamine-binding protein (Plasmodium falciparum).